Consider the following 130-residue polypeptide: Large ribosomal subunit protein bL31c (130 aa).

The N-terminal 36 residues, 1-36 (MVLTLSNQFLAKIPATPKTLTLPKTSSSTLRPQWSC), are a transit peptide targeting the chloroplast.

This sequence belongs to the bacterial ribosomal protein bL31 family. Type A subfamily. Component of the chloroplast large ribosomal subunit (LSU). Mature 70S chloroplast ribosomes of higher plants consist of a small (30S) and a large (50S) subunit. The 30S small subunit contains 1 molecule of ribosomal RNA (16S rRNA) and 24 different proteins. The 50S large subunit contains 3 rRNA molecules (23S, 5S and 4.5S rRNA) and 33 different proteins.

The protein localises to the plastid. It is found in the chloroplast. Functionally, component of the chloroplast ribosome (chloro-ribosome), a dedicated translation machinery responsible for the synthesis of chloroplast genome-encoded proteins, including proteins of the transcription and translation machinery and components of the photosynthetic apparatus. The protein is Large ribosomal subunit protein bL31c (RPL31) of Spinacia oleracea (Spinach).